A 206-amino-acid polypeptide reads, in one-letter code: N-(5'-phosphoribosyl)anthranilate isomerase (206 aa).

This sequence belongs to the TrpF family.

It carries out the reaction N-(5-phospho-beta-D-ribosyl)anthranilate = 1-(2-carboxyphenylamino)-1-deoxy-D-ribulose 5-phosphate. Its pathway is amino-acid biosynthesis; L-tryptophan biosynthesis; L-tryptophan from chorismate: step 3/5. This chain is N-(5'-phosphoribosyl)anthranilate isomerase, found in Pseudomonas putida (strain W619).